Here is a 571-residue protein sequence, read N- to C-terminus: MFHEVILNVLKNPFIALFLTLSLGYLVGKIKYKTFVLGGISGSLIIGVIIGQLNITISPDIGSLFFALFIYAGGYQGGAQFFRSLNKDTLLLLASSTITCVLGLLCVLVFAWIFQLDKGTAAGLGAGGLTQSAMIGSANNAIAMINSVSESTIHTMQTNVTVGYAVCYIFGSFGPIILLATIFPLVMKWDLRKEAIKLATEQSDGNLDLEVGQFSAFSEYTTRAYKINRDSQLLGKSLVEVYKTYKYKVVIKNIIRDNKLLTITPETTINTNDIVAITFYADLDIQSIISKDIEVTKPEQFNFIEEKRSLILTNKNLFNKTIKEVKDIIQDRNYYGVFLQKIIRSGQKLPISDDLKLRRGDEIRLIGKPEDLDKISNKIGTFISEAPITDFIFFGLGMVLGYIFGLISFNIFGISITLGAGVDCLLSGLIFGWIRSIKPQFSNLPVGASNFIRDLGLAIFVASVGITAGPQAITTIKEHGLTLFFLGIGVTIIPQVISFYISYYLLKIKNPIVLLATIAGGRSVNPGFAALLERAGNATPVIPFTSSYALANIWLTLWGPVIVALVTIIPK.

A run of 11 helical transmembrane segments spans residues 5–27 (VILN…GYLV), 34–56 (TFVL…LNIT), 61–79 (IGSL…QGGA), 92–114 (LLAS…AWIF), 161–183 (TVGY…ATIF), 391–408 (FIFF…GLIS), 412–434 (FGIS…FGWI), 455–474 (LGLA…QAIT), 484–506 (FFLG…YYLL), 513–532 (VLLA…AALL), and 547–569 (SYAL…VTII).

This sequence belongs to the AAE transporter (TC 2.A.81) family.

The protein localises to the cell membrane. This is an uncharacterized protein from Francisella tularensis subsp. tularensis (strain SCHU S4 / Schu 4).